The sequence spans 235 residues: MDIKLKDFEGPLDLLLHLVSKYEVDIYDVPIVEVIEQYLAYIATLQAMRLEVAGEYMLMASQLMLIKSRNLLPKVVESTPIEDDPEMELLSQLEEYRRFKVLSEELANQHQERAKYFSKPKQEVIFEDAILLHDKSVMDLFLTFSQMMSQKQKELSNSQTVIEKEDYRIEDMMIVIERHFNLKKKTTLQEVFADCQTKSEMITLFLAMLELIKLHQITVEQDSNFSQVILRKEEK.

It belongs to the ScpA family. As to quaternary structure, component of a cohesin-like complex composed of ScpA, ScpB and the Smc homodimer, in which ScpA and ScpB bind to the head domain of Smc. The presence of the three proteins is required for the association of the complex with DNA.

It localises to the cytoplasm. Participates in chromosomal partition during cell division. May act via the formation of a condensin-like complex containing Smc and ScpB that pull DNA away from mid-cell into both cell halves. In Streptococcus agalactiae serotype III (strain NEM316), this protein is Segregation and condensation protein A.